Here is a 1287-residue protein sequence, read N- to C-terminus: Rho GTPase-activating protein 33 (1287 aa).

Residues 1–40 (MVARSTDSLDGPGEGSVQPLPTAGGPSVKGKPGKRLSAPR) are disordered. Ser-8 carries the phosphoserine modification. The 110-residue stretch at 59–168 (FGHIQLLLSP…CGPVLTWMEL (110 aa)) folds into the PX; atypical domain. The 63-residue stretch at 186–248 (PAVAAAHVIK…PSECVELFTE (63 aa)) folds into the SH3 domain. The 196-residue stretch at 315 to 510 (CDLGEHLSNS…FLLTHVDVLF (196 aa)) folds into the Rho-GAP domain. Disordered stretches follow at residues 551–792 (RTQG…SPAA), 813–832 (AGGAPASATPTPALSPGRSL), 859–1030 (KLRG…VPTP), 1056–1075 (GPPSFQPSSPAPVWRSSLGP), 1090–1134 (GASE…SPDF), and 1146–1287 (PPDH…RSYC). Over residues 558–571 (TPTEPTTPKAPASP) the composition is skewed to low complexity. Phosphoserine is present on Ser-570. Residues 572 to 584 (AERRKGERGEKQR) are compositionally biased toward basic and acidic residues. Residues 622–645 (SGSRPDTVTLRSAKSEESLSSQAS) are compositionally biased toward polar residues. A Phosphoserine modification is found at Ser-636. Residues 672 to 709 (AGSCESLSSSSSSESSSSESSSSSSESSAAGLGALSGS) are compositionally biased toward low complexity. A Phosphoserine modification is found at Ser-727. The span at 752 to 766 (PGDPAPPASPAPPAP) shows a compositional bias: pro residues. 2 stretches are compositionally biased toward low complexity: residues 813–829 (AGGAPASATPTPALSPG) and 896–919 (PARLMALALAERAQQVAEQQSQQE). 2 stretches are compositionally biased toward polar residues: residues 972 to 981 (RQQSDGSLLR) and 1019 to 1028 (SPCSVPSQVP). Tyr-1169 is subject to Phosphotyrosine. Residues 1175-1189 (GPRGPSPASSSSSSP) are compositionally biased toward low complexity. Arg-1244 bears the Omega-N-methylarginine mark. Residues 1274 to 1287 (SWSLHSEGQTRSYC) show a composition bias toward polar residues.

Belongs to the PX domain-containing GAP family. In terms of assembly, specifically interacts with CDC42 and RHOQ/TC10 through its Rho-GAP domain. Interacts with NEK6.

Its function is as follows. May be involved in several stages of intracellular trafficking. Could play an important role in the regulation of glucose transport by insulin. May act as a downstream effector of RHOQ/TC10 in the regulation of insulin-stimulated glucose transport. The protein is Rho GTPase-activating protein 33 (ARHGAP33) of Homo sapiens (Human).